An 856-amino-acid chain; its full sequence is Serine/threonine-protein phosphatase 6 regulatory subunit 1 (856 aa).

The segment at 10–403 is interaction with PPP6C; that stretch reads SSHLDTLLEK…VFNNFLHAQV (394 aa). A Phosphoserine modification is found at Ser-232. A Phosphothreonine modification is found at Thr-524. Phosphoserine is present on residues Ser-529, Ser-530, and Ser-531. Residues 621–630 show a composition bias toward acidic residues; that stretch reads DDEEEEEEEG. 2 disordered regions span residues 621–770 and 792–856; these read DDEE…KVAE and RSAP…SGSQ. Phosphoserine occurs at positions 633 and 636. Polar residues predominate over residues 644-656; that stretch reads QGSQPVRASQASQ. A compositionally biased stretch (acidic residues) spans 667-683; that stretch reads DSEEEDEEEDEEEDEGA. Phosphoserine occurs at positions 698 and 739. A compositionally biased stretch (polar residues) spans 794 to 809; that stretch reads APSSLDSATRDPSTSV. The residue at position 826 (Ser-826) is a Phosphoserine. Positions 842 to 856 are enriched in low complexity; that stretch reads PNGSTPGGPISSGSQ.

This sequence belongs to the SAPS family. Protein phosphatase 6 (PP6) holoenzyme is proposed to be a heterotrimeric complex formed of the catalytic subunit, a SAPS domain-containing subunit (PP6R) and an ankyrin repeat-domain containing regulatory subunit (ARS). Interacts with PPP6C and NFKBIE. Interacts with ANKRD28, ANKRD44 and ANKRD52. As to expression, ubiquitous with highest expression in lung, spleen and bladder.

Its subcellular location is the cytoplasm. Its function is as follows. Regulatory subunit of protein phosphatase 6 (PP6). May function as a scaffolding PP6 subunit. Involved in the PP6-mediated dephosphorylation of NFKBIE opposing its degradation in response to TNF-alpha. This chain is Serine/threonine-protein phosphatase 6 regulatory subunit 1 (Ppp6r1), found in Mus musculus (Mouse).